A 505-amino-acid polypeptide reads, in one-letter code: 6-phosphofructo-2-kinase/fructose-2,6-bisphosphatase 2 (505 aa).

Positions 1 to 20 (MSGASSSEQNNNSYETKTPN) are disordered. The residue at position 2 (Ser-2) is an N-acetylserine. The interval 2–248 (SGASSSEQNN…VYYLMNIHVQ (247 aa)) is 6-phosphofructo-2-kinase. Residue Ser-29 is modified to Phosphoserine; by PKA. 45-53 (GLPARGKTY) lines the ATP pocket. Residues Arg-78 and Arg-102 each coordinate beta-D-fructose 6-phosphate. Asp-128 is a catalytic residue. Residues Thr-130 and Arg-136 each coordinate beta-D-fructose 6-phosphate. Cys-158 is a catalytic residue. Residue 167–172 (NILEVK) coordinates ATP. Positions 172, 193, and 197 each coordinate beta-D-fructose 6-phosphate. Residues 249–505 (PRTIYLCRHG…RAQDMQEGAD (257 aa)) are fructose-2,6-bisphosphatase. Residue Arg-256 participates in beta-D-fructose 2,6-bisphosphate binding. Catalysis depends on His-257, which acts as the Tele-phosphohistidine intermediate. Beta-D-fructose 2,6-bisphosphate is bound by residues Asn-263 and Gly-269. Catalysis depends on Glu-326, which acts as the Proton donor/acceptor. 6 residues coordinate beta-D-fructose 2,6-bisphosphate: Tyr-337, Arg-351, Lys-355, Tyr-366, Gln-392, and Arg-396. An ATP-binding site is contributed by 348–351 (FALR). Residues 392–396 (QAVMR) and Tyr-428 contribute to the ATP site. Residues 445–505 (HRDKPTNNFP…RAQDMQEGAD (61 aa)) form a disordered region. The span at 450-476 (TNNFPKNQTPVRMRRNSFTPLSSSNTI) shows a compositional bias: polar residues. At Ser-466 the chain carries Phosphoserine; by AMPK. 2 positions are modified to phosphothreonine: Thr-468 and Thr-475. Residue Ser-483 is modified to Phosphoserine; by BRAF. Residues Ser-486 and Ser-493 each carry the phosphoserine modification.

In the C-terminal section; belongs to the phosphoglycerate mutase family. Homodimer. Forms a heterodimer with PFKFB3. Phosphorylation by AMPK stimulates activity. Heart.

The catalysed reaction is beta-D-fructose 2,6-bisphosphate + H2O = beta-D-fructose 6-phosphate + phosphate. The enzyme catalyses beta-D-fructose 6-phosphate + ATP = beta-D-fructose 2,6-bisphosphate + ADP + H(+). With respect to regulation, phosphorylation results in the activation of the kinase activity. In terms of biological role, synthesis and degradation of fructose 2,6-bisphosphate. This Homo sapiens (Human) protein is 6-phosphofructo-2-kinase/fructose-2,6-bisphosphatase 2.